The following is a 329-amino-acid chain: Vacuolar protein sorting-associated protein 26B-like (329 aa).

This sequence belongs to the VPS26 family.

It localises to the cytoplasm. It is found in the membrane. Probable component of the retromer complex, a complex required to retrieve lysosomal enzyme receptors (IGF2R and M6PR) from endosomes to the trans-Golgi network. This Danio rerio (Zebrafish) protein is Vacuolar protein sorting-associated protein 26B-like (vps26bl).